A 447-amino-acid polypeptide reads, in one-letter code: MSASATNGTHYEQLHQGRTKMYKSKVDVVLGAQWGDEGKGKVVDMLASDVDIVCRCQGGNNAGHTVVANGTEFDFHLLPSGVVNEKCVSVIGNGVVIHLPSLFDEVLKNEAKGLQHLENRLIISDRAHLVFDFHQHVDGMQEAEKGGKSLGTTKKGIGPAYSSKATRNGIRVGELLGDFNLFSEKFKSIVATHVRLFPSINVDVEAELARYKDYADKVRPYVKDTICFLHTALRNGKTILVEGANAAMLDIDFGTYPYVTSSNCSIGGVLTGLGLPPQTIGEVIGVVKAYTTRVGDGPFPTEQLNDIGDLLQTRGFEIGVTTKRKRRCGWLDIPLLKYTSLVNGYTCICLTKLDILDTLPEIKVAVAYKKPNGEKLDHFPGTIAELGNIEVEYAVLPGWQTSTEEVRNFKELPENAQSYVRFLESELSVPVRWVGVGKGRESIINVH.

Residues 35–41 (GDEGKGK) and 63–65 (GHT) contribute to the GTP site. Aspartate 36 serves as the catalytic Proton acceptor. The Mg(2+) site is built by aspartate 36 and glycine 63. IMP-binding positions include 36 to 39 (DEGK), 61 to 64 (NAGH), threonine 153, arginine 167, asparagine 245, threonine 260, and arginine 324. Histidine 64 functions as the Proton donor in the catalytic mechanism. 320–326 (VTTKRKR) serves as a coordination point for substrate. Residues arginine 326, 352-354 (KLD), and 435-437 (GVG) contribute to the GTP site.

This sequence belongs to the adenylosuccinate synthetase family. As to quaternary structure, homodimer. Requires Mg(2+) as cofactor.

The protein resides in the cytoplasm. The enzyme catalyses IMP + L-aspartate + GTP = N(6)-(1,2-dicarboxyethyl)-AMP + GDP + phosphate + 2 H(+). Its pathway is purine metabolism; AMP biosynthesis via de novo pathway; AMP from IMP: step 1/2. Functionally, plays an important role in the de novo pathway and in the salvage pathway of purine nucleotide biosynthesis. Catalyzes the first committed step in the biosynthesis of AMP from IMP. This is Adenylosuccinate synthetase from Drosophila sechellia (Fruit fly).